A 580-amino-acid chain; its full sequence is tRNA-guanine(15) transglycosylase (580 aa).

Catalysis depends on Asp91, which acts as the Nucleophile. Residues Asp126 and Ala192 each coordinate substrate. Zn(2+)-binding residues include Cys275, Cys277, and Cys280. Residues 504 to 579 (RMRVVVDEDA…LAVKVRRGVE (76 aa)) form the PUA domain.

It belongs to the archaeosine tRNA-ribosyltransferase family. Zn(2+) serves as cofactor.

The catalysed reaction is guanosine(15) in tRNA + 7-cyano-7-deazaguanine = 7-cyano-7-carbaguanosine(15) in tRNA + guanine. It participates in tRNA modification; archaeosine-tRNA biosynthesis. Exchanges the guanine residue with 7-cyano-7-deazaguanine (preQ0) at position 15 in the dihydrouridine loop (D-loop) of archaeal tRNAs. This is tRNA-guanine(15) transglycosylase from Thermococcus onnurineus (strain NA1).